Here is a 617-residue protein sequence, read N- to C-terminus: Dihydroxy-acid dehydratase (617 aa).

D81 contributes to the Mg(2+) binding site. C122 is a [2Fe-2S] cluster binding site. Mg(2+)-binding residues include D123 and K124. Residue K124 is modified to N6-carboxylysine. C195 contacts [2Fe-2S] cluster. Residue E491 participates in Mg(2+) binding. S517 serves as the catalytic Proton acceptor.

This sequence belongs to the IlvD/Edd family. In terms of assembly, homodimer. [2Fe-2S] cluster is required as a cofactor. Requires Mg(2+) as cofactor.

The catalysed reaction is (2R)-2,3-dihydroxy-3-methylbutanoate = 3-methyl-2-oxobutanoate + H2O. It catalyses the reaction (2R,3R)-2,3-dihydroxy-3-methylpentanoate = (S)-3-methyl-2-oxopentanoate + H2O. It functions in the pathway amino-acid biosynthesis; L-isoleucine biosynthesis; L-isoleucine from 2-oxobutanoate: step 3/4. Its pathway is amino-acid biosynthesis; L-valine biosynthesis; L-valine from pyruvate: step 3/4. Its function is as follows. Functions in the biosynthesis of branched-chain amino acids. Catalyzes the dehydration of (2R,3R)-2,3-dihydroxy-3-methylpentanoate (2,3-dihydroxy-3-methylvalerate) into 2-oxo-3-methylpentanoate (2-oxo-3-methylvalerate) and of (2R)-2,3-dihydroxy-3-methylbutanoate (2,3-dihydroxyisovalerate) into 2-oxo-3-methylbutanoate (2-oxoisovalerate), the penultimate precursor to L-isoleucine and L-valine, respectively. The chain is Dihydroxy-acid dehydratase from Hydrogenovibrio crunogenus (strain DSM 25203 / XCL-2) (Thiomicrospira crunogena).